We begin with the raw amino-acid sequence, 201 residues long: Holliday junction branch migration complex subunit RuvA (201 aa).

A domain I region spans residues 1–64 (MIGRLRGTLA…EDAHLLYGFA (64 aa)). Positions 65–143 (EKRERELFRE…AWENMPTIAP (79 aa)) are domain II. Residues 144–152 (LVMEPRASA) are flexible linker. Residues 153-201 (TVSSAEADAVSALIALGFKPQEASRAVAAVPGEDLSSEEMIRQALKGMV) form a domain III region.

It belongs to the RuvA family. In terms of assembly, homotetramer. Forms an RuvA(8)-RuvB(12)-Holliday junction (HJ) complex. HJ DNA is sandwiched between 2 RuvA tetramers; dsDNA enters through RuvA and exits via RuvB. An RuvB hexamer assembles on each DNA strand where it exits the tetramer. Each RuvB hexamer is contacted by two RuvA subunits (via domain III) on 2 adjacent RuvB subunits; this complex drives branch migration. In the full resolvosome a probable DNA-RuvA(4)-RuvB(12)-RuvC(2) complex forms which resolves the HJ.

The protein resides in the cytoplasm. Functionally, the RuvA-RuvB-RuvC complex processes Holliday junction (HJ) DNA during genetic recombination and DNA repair, while the RuvA-RuvB complex plays an important role in the rescue of blocked DNA replication forks via replication fork reversal (RFR). RuvA specifically binds to HJ cruciform DNA, conferring on it an open structure. The RuvB hexamer acts as an ATP-dependent pump, pulling dsDNA into and through the RuvAB complex. HJ branch migration allows RuvC to scan DNA until it finds its consensus sequence, where it cleaves and resolves the cruciform DNA. The polypeptide is Holliday junction branch migration complex subunit RuvA (Pseudomonas aeruginosa (strain LESB58)).